The following is a 432-amino-acid chain: EF-hand calcium-binding domain-containing protein 3 (432 aa).

EF-hand domains follow at residues 45-80 (AQLEAFRNAYNFFTKDRTGCIDSHGLMSTVAKLGMN) and 81-116 (LNAYDIYNELKCADRDRDGKINFSDFIDVLTDKKLF). Residues aspartate 94, aspartate 96, aspartate 98, lysine 100, and aspartate 105 each coordinate Ca(2+). Residue tyrosine 273 is modified to Phosphotyrosine. A disordered region spans residues 394–432 (NVNKTSPSNSGLSSPSDLSESDPETGRKRKRKSSRGFRQ). Positions 399 to 411 (SPSNSGLSSPSDL) are enriched in low complexity. Positions 420–432 (RKRKRKSSRGFRQ) are enriched in basic residues.

The protein is EF-hand calcium-binding domain-containing protein 3 (Efcab3) of Rattus norvegicus (Rat).